Reading from the N-terminus, the 592-residue chain is Aspartate--tRNA ligase (592 aa).

Position 176 (Glu-176) interacts with L-aspartate. Residues 200 to 203 form an aspartate region; sequence QIFK. Arg-222 lines the L-aspartate pocket. ATP is bound by residues 222–224 and Gln-231; that span reads RDE. His-450 provides a ligand contact to L-aspartate. ATP is bound at residue Glu-484. Arg-491 lines the L-aspartate pocket. 536–539 is an ATP binding site; sequence GLDR.

It belongs to the class-II aminoacyl-tRNA synthetase family. Type 1 subfamily. Homodimer.

It is found in the cytoplasm. The catalysed reaction is tRNA(Asp) + L-aspartate + ATP = L-aspartyl-tRNA(Asp) + AMP + diphosphate. In terms of biological role, catalyzes the attachment of L-aspartate to tRNA(Asp) in a two-step reaction: L-aspartate is first activated by ATP to form Asp-AMP and then transferred to the acceptor end of tRNA(Asp). The sequence is that of Aspartate--tRNA ligase from Macrococcus caseolyticus (strain JCSC5402) (Macrococcoides caseolyticum).